Consider the following 337-residue polypeptide: Anthranilate phosphoribosyltransferase (337 aa).

Residues Gly-81, Gly-84–Asp-85, Thr-89, Asn-91–Thr-94, Lys-109–Ser-117, and Thr-121 each bind 5-phospho-alpha-D-ribose 1-diphosphate. Gly-81 is a binding site for anthranilate. Ser-93 lines the Mg(2+) pocket. Anthranilate is bound at residue Asn-112. Arg-167 lines the anthranilate pocket. Asp-225 and Glu-226 together coordinate Mg(2+).

It belongs to the anthranilate phosphoribosyltransferase family. As to quaternary structure, homodimer. It depends on Mg(2+) as a cofactor.

It carries out the reaction N-(5-phospho-beta-D-ribosyl)anthranilate + diphosphate = 5-phospho-alpha-D-ribose 1-diphosphate + anthranilate. Its pathway is amino-acid biosynthesis; L-tryptophan biosynthesis; L-tryptophan from chorismate: step 2/5. Functionally, catalyzes the transfer of the phosphoribosyl group of 5-phosphorylribose-1-pyrophosphate (PRPP) to anthranilate to yield N-(5'-phosphoribosyl)-anthranilate (PRA). This Rhizobium meliloti (strain 1021) (Ensifer meliloti) protein is Anthranilate phosphoribosyltransferase.